Consider the following 417-residue polypeptide: Phosphoglycerate kinase 1 (417 aa).

Ser-2 is subject to N-acetylserine. A phosphoserine mark is found at Ser-2 and Ser-4. The globular domain-1 stretch occupies residues 2–186; sequence SLSNKLTLDK…VGVNLPQKAG (185 aa). Lys-6 is modified (N6-succinyllysine). Residue Lys-11 is modified to N6-acetyllysine. (2R)-3-phosphoglycerate-binding residues include Val-23, Asp-24, Phe-25, Asn-26, Gln-38, and Arg-39. The tract at residues 38–43 is mitochondrial targeting region exposed following cis-trans isomerization by PIN1 and recognized by the TOM complex for mitochondrial translocation of the protein; that stretch reads QRIKAA. Residue Lys-48 is modified to N6-acetyllysine; alternate. An N6-succinyllysine; alternate modification is found at Lys-48. (2R)-3-phosphoglycerate-binding residues include Ser-62, His-63, Gly-65, and Arg-66. The residue at position 75 (Lys-75) is an N6-acetyllysine. Tyr-76 is subject to Phosphotyrosine. An N6-acetyllysine mark is found at Lys-86 and Lys-91. Lys-97 carries the N6-acetyllysine; alternate modification. Lys-97 bears the N6-(2-hydroxyisobutyryl)lysine; alternate mark. (2R)-3-phosphoglycerate is bound by residues Leu-122 and Arg-123. An N6-acetyllysine; alternate modification is found at Lys-131. Lys-131 carries the N6-malonyllysine; alternate modification. Lys-146 is subject to N6-acetyllysine. His-170 and Arg-171 together coordinate (2R)-3-phosphoglycerate. The linker stretch occupies residues 187–190; the sequence is GFLM. At Lys-191 the chain carries N6-succinyllysine. Residues 191–417 are globular domain-2; it reads KKELNYFAKA…LPGVDALSNV (227 aa). Tyr-196 carries the phosphotyrosine modification. At Lys-199 the chain carries N6-acetyllysine. The residue at position 203 (Ser-203) is a Phosphoserine. Gly-214 lines the ADP pocket. A CDP-binding site is contributed by Gly-214. AMP contacts are provided by Ala-215 and Lys-216. Ala-215 contributes to the ATP binding site. Ala-215 provides a ligand contact to Mg(2+). Lys-216 carries the N6-(2-hydroxyisobutyryl)lysine modification. 2 residues coordinate Mg(2+): Ala-218 and Asp-219. Asp-219 contacts CDP. Lys-220 contacts AMP. Lys-220 provides a ligand contact to ATP. Lys-220 is subject to N6-(2-hydroxyisobutyryl)lysine. Gly-238 contacts ADP. A CDP-binding site is contributed by Gly-238. Gly-239 is an AMP binding site. Gly-239 serves as a coordination point for ATP. Lys-267 and Lys-291 each carry N6-acetyllysine. Gly-313 contributes to the AMP binding site. Gly-313 contributes to the ATP binding site. Lys-323 carries the N6-(2-hydroxyisobutyryl)lysine modification. CDP contacts are provided by Gly-338, Val-340, and Phe-343. Residue Phe-343 participates in ADP binding. Glu-344 provides a ligand contact to AMP. Position 344 (Glu-344) interacts with ATP. Lys-361 bears the N6-acetyllysine mark. The ATP site is built by Asp-375 and Thr-376. Asp-375 is a Mg(2+) binding site. Positions 406–417 are associated with globular domain 1; sequence KVLPGVDALSNV.

This sequence belongs to the phosphoglycerate kinase family. Monomer. Interacts with kinase MAPK1/ERK2; the interaction is direct, occurs under hypoxic conditions, and promotes its interaction with PIN1. Interacts with peptidyl-prolyl cis-trans isomerase PIN1; the interaction is direct, occurs under hypoxic conditions, and targets the protein to the mitochondrion by promoting interactions with the TOM complex. Interacts with mitochondrial circRNA mcPGK1 (via its 2nd stem-loop); the interaction is direct and targets the protein to the mitochondrion by promoting interactions with the TOM complex. Interacts with pyruvate dehydrogenase kinase PDK1; the interaction is direct, occurs under hypoxic conditions and leads to PDK1-mediated inhibition of pyruvate dehydrogenase complex activity. The cofactor is Mg(2+). Phosphorylated at Ser-203 by MAPK1/ERK2 under hypoxic conditions, which promotes its mitochondrial targeting.

The protein localises to the cytoplasm. It is found in the cytosol. Its subcellular location is the mitochondrion matrix. The enzyme catalyses (2R)-3-phosphoglycerate + ATP = (2R)-3-phospho-glyceroyl phosphate + ADP. The catalysed reaction is L-seryl-[protein] + ATP = O-phospho-L-seryl-[protein] + ADP + H(+). It functions in the pathway carbohydrate degradation; glycolysis; pyruvate from D-glyceraldehyde 3-phosphate: step 2/5. Functionally, catalyzes one of the two ATP producing reactions in the glycolytic pathway via the reversible conversion of 1,3-diphosphoglycerate to 3-phosphoglycerate. Both L- and D- forms of purine and pyrimidine nucleotides can be used as substrates, but the activity is much lower on pyrimidines. In addition to its role as a glycolytic enzyme, it seems that PGK-1 acts as a polymerase alpha cofactor protein (primer recognition protein). Acts as a protein kinase when localized to the mitochondrion where it phosphorylates pyruvate dehydrogenase kinase PDK1 to inhibit pyruvate dehydrogenase complex activity and suppress the formation of acetyl-coenzyme A from pyruvate, and consequently inhibit oxidative phosphorylation and promote glycolysis. May play a role in sperm motility. The polypeptide is Phosphoglycerate kinase 1 (PGK1) (Equus caballus (Horse)).